We begin with the raw amino-acid sequence, 359 residues long: MATH domain and coiled-coil domain-containing protein At2g42475 (359 aa).

One can recognise an MATH domain in the interval 6 to 128 (KTSFTFEIEN…NDKLIITVEV (123 aa)). A coiled-coil region spans residues 146-337 (EFKELQDLYN…NLELMVLDFK (192 aa)).

The polypeptide is MATH domain and coiled-coil domain-containing protein At2g42475 (Arabidopsis thaliana (Mouse-ear cress)).